The following is a 4717-amino-acid chain: Midasin (4717 aa).

AAA-ATPase protomer stretches follow at residues 149–384 (LVQK…FGAF), 458–797 (EQLA…GLRR), 871–1131 (EHYI…QEVI), 1157–1448 (SLKE…NACE), 1552–1811 (VLRA…EVFD), and 1858–2106 (VLES…FLLK). ATP-binding positions include 159–166 (GPEGIGKK) and 474–481 (GETGTGKT). Ser-593 carries the post-translational modification Phosphoserine. ATP-binding positions include 901–908 (GPTSSGKT), 1193–1200 (GDTGCGKT), 1566–1573 (GSPGVGKT), and 1876–1883 (GDTATGKT). Residues 2173 to 3925 (KLLRKVLLTN…SGVGAEDITN (1753 aa)) are linker. Disordered regions lie at residues 3898–3924 (PQEG…EDIT), 3936–4283 (LANE…LGDH), and 4295–4365 (EWED…EVGD). Composition is skewed to acidic residues over residues 3936–3950 (LANE…DLDE) and 3973–3993 (ENSD…DIPE). The span at 4020 to 4030 (NEQSAANNESD) shows a compositional bias: polar residues. Positions 4031 to 4049 (LVSKEDDNKALEDKDRQEK) are enriched in basic and acidic residues. The span at 4050-4066 (EDEEEMSDDVGIDDEIQ) shows a compositional bias: acidic residues. Residues 4080–4103 (NEDHLDLPEDLKLDEKEGDVSKDS) show a composition bias toward basic and acidic residues. 3 stretches are compositionally biased toward acidic residues: residues 4104–4177 (DLED…ESTE), 4184–4196 (EELE…EDQA), and 4226–4236 (ENEELGEEDGA). Composition is skewed to basic and acidic residues over residues 4258 to 4275 (QKGE…EADR) and 4329 to 4342 (AEKD…RDES). Residues 4343–4355 (ANQNPDSMNSTNI) show a composition bias toward polar residues. In terms of domain architecture, VWFA spans 4505–4707 (QVMISIDDSK…ELPQLLSSAL (203 aa)).

Belongs to the midasin family. Associates with pre-60S ribosomes in the nucleoplasm.

The protein localises to the nucleus. It localises to the nucleolus. It is found in the nucleoplasm. Functionally, nuclear chaperone required for maturation and nuclear export of pre-60S ribosome subunits. Functions at successive maturation steps to remove ribosomal factors at critical transition points, first driving the exit of early pre-60S particles from the nucleolus and then driving late pre-60S particles from the nucleus. The chain is Midasin (mdn1) from Schizosaccharomyces pombe (strain 972 / ATCC 24843) (Fission yeast).